A 221-amino-acid polypeptide reads, in one-letter code: Probable transaldolase (221 aa).

The active-site Schiff-base intermediate with substrate is the lysine 83.

It belongs to the transaldolase family. Type 3B subfamily.

The protein resides in the cytoplasm. The enzyme catalyses D-sedoheptulose 7-phosphate + D-glyceraldehyde 3-phosphate = D-erythrose 4-phosphate + beta-D-fructose 6-phosphate. It participates in carbohydrate degradation; pentose phosphate pathway; D-glyceraldehyde 3-phosphate and beta-D-fructose 6-phosphate from D-ribose 5-phosphate and D-xylulose 5-phosphate (non-oxidative stage): step 2/3. In terms of biological role, transaldolase is important for the balance of metabolites in the pentose-phosphate pathway. The protein is Probable transaldolase of Herpetosiphon aurantiacus (strain ATCC 23779 / DSM 785 / 114-95).